A 364-amino-acid chain; its full sequence is DNA replication and repair protein RecF (364 aa).

30–37 (GANGSGKT) is an ATP binding site.

This sequence belongs to the RecF family.

The protein localises to the cytoplasm. In terms of biological role, the RecF protein is involved in DNA metabolism; it is required for DNA replication and normal SOS inducibility. RecF binds preferentially to single-stranded, linear DNA. It also seems to bind ATP. In Sodalis glossinidius (strain morsitans), this protein is DNA replication and repair protein RecF.